The primary structure comprises 544 residues: Tyrosyl-DNA phosphodiesterase 1 (544 aa).

His-182 acts as the Nucleophile in catalysis. Substrate is bound at residue Lys-184. An interaction with DNA region spans residues Ser-312–Ser-316. The active-site Proton donor/acceptor is His-432. Lys-434 serves as a coordination point for substrate.

Belongs to the tyrosyl-DNA phosphodiesterase family.

The protein resides in the nucleus. Functionally, DNA repair enzyme that can remove a variety of covalent adducts from DNA through hydrolysis of a 3'-phosphodiester bond, giving rise to DNA with a free 3' phosphate. Catalyzes the hydrolysis of dead-end complexes between DNA and the topoisomerase I active site tyrosine residue. Hydrolyzes 3'-phosphoglycolates on protruding 3' ends on DNA double-strand breaks due to DNA damage by radiation and free radicals. Also cleaves 5' phosphotyrosyl adducts resulting from dead-end complexes between DNA and the active site tyrosine of topoisomerase II. Contributes to DNA repair after radiation damage. Acts on blunt-ended double-strand DNA breaks and on single-stranded DNA. May have low 3'exonuclease activity and may be able to remove a single nucleoside from the 3'end of DNA and RNA molecules with 3'hydroxyl groups. Has no exonuclease activity towards DNA or RNA with a 3'phosphate. This is Tyrosyl-DNA phosphodiesterase 1 (TDP1) from Saccharomyces cerevisiae (strain ATCC 204508 / S288c) (Baker's yeast).